Here is a 103-residue protein sequence, read N- to C-terminus: Phosphoribosyl-ATP pyrophosphatase (103 aa).

Belongs to the PRA-PH family.

It is found in the cytoplasm. The enzyme catalyses 1-(5-phospho-beta-D-ribosyl)-ATP + H2O = 1-(5-phospho-beta-D-ribosyl)-5'-AMP + diphosphate + H(+). It participates in amino-acid biosynthesis; L-histidine biosynthesis; L-histidine from 5-phospho-alpha-D-ribose 1-diphosphate: step 2/9. This Cereibacter sphaeroides (strain ATCC 17023 / DSM 158 / JCM 6121 / CCUG 31486 / LMG 2827 / NBRC 12203 / NCIMB 8253 / ATH 2.4.1.) (Rhodobacter sphaeroides) protein is Phosphoribosyl-ATP pyrophosphatase (hisE).